The sequence spans 1034 residues: DNA polymerase III subunit alpha (1034 aa).

This sequence belongs to the DNA polymerase type-C family. DnaE subfamily. In terms of assembly, DNA polymerase III contains a core (composed of alpha, epsilon and theta chains) that associates with a tau subunit. This core dimerizes to form the PolIII' complex. PolIII' associates with the gamma complex (composed of gamma, delta, delta', psi and chi chains) and with the beta chain to form the complete DNA polymerase III complex.

The protein resides in the cytoplasm. It catalyses the reaction DNA(n) + a 2'-deoxyribonucleoside 5'-triphosphate = DNA(n+1) + diphosphate. Functionally, DNA polymerase III is a complex, multichain enzyme responsible for most of the replicative synthesis in bacteria. This DNA polymerase also exhibits 3' to 5' exonuclease activity. The alpha chain is the DNA polymerase. In Streptococcus pyogenes, this protein is DNA polymerase III subunit alpha (dnaE).